We begin with the raw amino-acid sequence, 421 residues long: Ig-like V-type domain-containing protein FAM187A (421 aa).

The signal sequence occupies residues 1 to 18 (MNLAHTTVLLWAWGSLQA). The Extracellular segment spans residues 19-377 (FEIVEKENIF…VSFSDPETRA (359 aa)). An Ig-like V-type domain is found at 268–362 (PWLPQVPIQF…IAGFRLGVTS (95 aa)). The cysteines at positions 290 and 346 are disulfide-linked. Asparagine 318 carries an N-linked (GlcNAc...) asparagine glycan. The chain crosses the membrane as a helical span at residues 378-398 (ALGLILIGYMLITVIFISIHL). The Cytoplasmic portion of the chain corresponds to 399–421 (CRCCCYLFRFCPNFSPRLSRPQL).

This sequence belongs to the FAM187 family.

The protein localises to the membrane. This Bos taurus (Bovine) protein is Ig-like V-type domain-containing protein FAM187A (FAM187A).